Reading from the N-terminus, the 455-residue chain is UDP-N-acetylmuramoylalanine--D-glutamate ligase (455 aa).

112–118 provides a ligand contact to ATP; the sequence is GTNGKTT.

It belongs to the MurCDEF family.

The protein resides in the cytoplasm. It carries out the reaction UDP-N-acetyl-alpha-D-muramoyl-L-alanine + D-glutamate + ATP = UDP-N-acetyl-alpha-D-muramoyl-L-alanyl-D-glutamate + ADP + phosphate + H(+). Its pathway is cell wall biogenesis; peptidoglycan biosynthesis. Its function is as follows. Cell wall formation. Catalyzes the addition of glutamate to the nucleotide precursor UDP-N-acetylmuramoyl-L-alanine (UMA). In Trichormus variabilis (strain ATCC 29413 / PCC 7937) (Anabaena variabilis), this protein is UDP-N-acetylmuramoylalanine--D-glutamate ligase.